A 397-amino-acid chain; its full sequence is MIEPLPTEDIPKQSVSIVGIASRCAPHKLGADELEAIARRHYSSTPSLEKMLEINRKTRIDHRYSVFSSDHEHWHRPTIPSFSECDSLFKEYGIPLASAASARAIQDWGGVPDEITHLVAVTCTNTAHPGFDSVLCRKLGLKCNVRRVLLHGIGCGGGISAMRVAHELLLGSTQQGVPARALIVACEVPTVFARSELDIMDKTQDVNVAMCLFGDCAAALVLSNGIGHKASEQRPIWNILNCEPTQFDGTEDIAHFNVHDKGYHAIIDKRIPQLTGKCVPAGFQSLISSTPSLALEEKNYVPSNYGWAVHPGGYAVLVAAQDALGLTADDLRASYDAYRDGGNTISTTIIRILEKLRDEHKHGSNQKDKLVLAAIGHGITLETAILTRPGSSSYLHA.

Residues Lys-50 and 50 to 57 contribute to the CoA site; that span reads KMLEINRK. Catalysis depends on Cys-155, which acts as the Nucleophile. 214–215 lines the substrate pocket; that stretch reads GD. CoA is bound by residues Ile-267, Gly-312, 312–315, Tyr-314, and Ala-315; that span reads GGYA. His-377 is an active-site residue.

It belongs to the thiolase-like superfamily. Chalcone/stilbene synthases family. As to quaternary structure, homodimer.

Its function is as follows. Acylalkylpyrone synthase that catalyzes not only the polyketide chain elongation but also the one-pot condensation of two beta-ketoacyl units to produce the 3-acyl-4-hydroxy-6-alkyl-alpha-pyrone (AcAP) scaffold, a precursor of csypyrone B. The enzyme reaction is initiated by the loading of acetoacetyl-CoA onto Cys-155, and subsequent thioester bond cleavage by the nucleophilic water generates the beta-keto acid intermediate, which is placed within a pocket. The second beta-ketoacyl unit is then produced by polyketide chain elongation of fatty acyl-CoA with one molecule of malonyl-CoA, and the condensation with the beta-ketoacid generates the final products. Csypyrone B1 is the major product and contains a propanoic acid side-chain, whereas csypyrones B2 and B3 are minor compounds that contain butyric or pentanoic acid side-chains, respectively. The chain is Acylalkylpyrone synthase csyB from Aspergillus oryzae (strain ATCC 42149 / RIB 40) (Yellow koji mold).